We begin with the raw amino-acid sequence, 149 residues long: Putative pre-16S rRNA nuclease (149 aa).

The protein belongs to the YqgF nuclease family.

The protein localises to the cytoplasm. In terms of biological role, could be a nuclease involved in processing of the 5'-end of pre-16S rRNA. The chain is Putative pre-16S rRNA nuclease from Burkholderia orbicola (strain MC0-3).